Here is a 497-residue protein sequence, read N- to C-terminus: Angiopoietin-1 (497 aa).

An N-terminal signal peptide occupies residues 1–15 (MTVFLSFAFLAAILT). Residues asparagine 92, asparagine 122, asparagine 154, asparagine 243, and asparagine 294 are each glycosylated (N-linked (GlcNAc...) asparagine). Residues 153–261 (LNQTSRLEIQ…LELMDTVHNL (109 aa)) are a coiled coil. The 221-residue stretch at 276–496 (KEEEKPFRDC…STTMMIRPLD (221 aa)) folds into the Fibrinogen C-terminal domain. 2 cysteine pairs are disulfide-bonded: cysteine 285–cysteine 314 and cysteine 438–cysteine 451.

In terms of assembly, homooligomer. Interacts with TEK/TIE2. Interacts with SVEP1/polydom. Interacts with THBD; this interaction significantly inhibits the generation of activated PC and TAFIa/CPB2 by the thrombin/thrombomodulin complex.

Its subcellular location is the secreted. Its function is as follows. Binds and activates TIE2 receptor by inducing its tyrosine phosphorylation. Implicated in endothelial developmental processes later and distinct from that of VEGF. Appears to play a crucial role in mediating reciprocal interactions between the endothelium and surrounding matrix and mesenchyme. Mediates blood vessel maturation/stability. It may play an important role in the heart early development. The sequence is that of Angiopoietin-1 (ANGPT1) from Bos taurus (Bovine).